The sequence spans 290 residues: tRNA dimethylallyltransferase (290 aa).

11 to 18 contributes to the ATP binding site; that stretch reads GPTASGKS. 13-18 contributes to the substrate binding site; sequence TASGKS. Interaction with substrate tRNA regions lie at residues 36–39 and 158–162; these read DSMQ and QRIVR.

It belongs to the IPP transferase family. In terms of assembly, monomer. The cofactor is Mg(2+).

It carries out the reaction adenosine(37) in tRNA + dimethylallyl diphosphate = N(6)-dimethylallyladenosine(37) in tRNA + diphosphate. Its function is as follows. Catalyzes the transfer of a dimethylallyl group onto the adenine at position 37 in tRNAs that read codons beginning with uridine, leading to the formation of N6-(dimethylallyl)adenosine (i(6)A). The protein is tRNA dimethylallyltransferase of Bartonella tribocorum (strain CIP 105476 / IBS 506).